The sequence spans 253 residues: Ubiquinone biosynthesis O-methyltransferase (253 aa).

S-adenosyl-L-methionine contacts are provided by Arg47, Gly78, Asp99, and Met141.

This sequence belongs to the methyltransferase superfamily. UbiG/COQ3 family.

It catalyses the reaction a 3-demethylubiquinol + S-adenosyl-L-methionine = a ubiquinol + S-adenosyl-L-homocysteine + H(+). It carries out the reaction a 3-(all-trans-polyprenyl)benzene-1,2-diol + S-adenosyl-L-methionine = a 2-methoxy-6-(all-trans-polyprenyl)phenol + S-adenosyl-L-homocysteine + H(+). Its pathway is cofactor biosynthesis; ubiquinone biosynthesis. In terms of biological role, O-methyltransferase that catalyzes the 2 O-methylation steps in the ubiquinone biosynthetic pathway. This Bradyrhizobium diazoefficiens (strain JCM 10833 / BCRC 13528 / IAM 13628 / NBRC 14792 / USDA 110) protein is Ubiquinone biosynthesis O-methyltransferase.